Consider the following 333-residue polypeptide: Flotillin-like protein FloA (333 aa).

2 helical membrane-spanning segments follow: residues 8 to 28 (LMPI…FTFI) and 30 to 50 (VGLW…TLVG).

Belongs to the flotillin-like FloA family. Homooligomerizes.

Its subcellular location is the cell membrane. It localises to the membrane raft. Functionally, found in functional membrane microdomains (FMM) that may be equivalent to eukaryotic membrane rafts. FMMs are highly dynamic and increase in number as cells age. Flotillins are thought to be important factors in membrane fluidity. This is Flotillin-like protein FloA from Desulfitobacterium hafniense (strain DSM 10664 / DCB-2).